The sequence spans 259 residues: MFFVLSPAKNLNEKDPAPVSEFTQPDLLAESDILMQQLRELAPQQIAELMHVSDKIALLNAQRNAEWNTPFTPENAKQAVFMFNGDVYEGMDANTLDIGQIRYLQNHVRLLSGLYGLLRPLDLIQPYRLEMGTAFANLRGKNLYEFWGDIITNLLNDTLAQAGSNTLVNLASQEYFKSVNTKKLRARLITPIFKDEKNGKYKIISFYAKRARGLMVRYAAEHHITDPEMLKNFNYEGYAFNDAASNESEWVFMRSEQIK.

It belongs to the UPF0246 family.

In Neisseria meningitidis serogroup B (strain ATCC BAA-335 / MC58), this protein is UPF0246 protein NMB0895.